The following is a 115-amino-acid chain: Ribonuclease P protein component (115 aa).

This sequence belongs to the RnpA family. As to quaternary structure, consists of a catalytic RNA component (M1 or rnpB) and a protein subunit.

It carries out the reaction Endonucleolytic cleavage of RNA, removing 5'-extranucleotides from tRNA precursor.. Its function is as follows. RNaseP catalyzes the removal of the 5'-leader sequence from pre-tRNA to produce the mature 5'-terminus. It can also cleave other RNA substrates such as 4.5S RNA. The protein component plays an auxiliary but essential role in vivo by binding to the 5'-leader sequence and broadening the substrate specificity of the ribozyme. This is Ribonuclease P protein component from Macrococcus caseolyticus (strain JCSC5402) (Macrococcoides caseolyticum).